Reading from the N-terminus, the 209-residue chain is MTPALDTALNAADGALRTLFAKPQASRTCPTVAGQRTELSTQEKALSGALMRVNHVGEVCAQALYAAQAVTTRDPALRRHFLAASREEGDHLAWTRERLDELGARPSLLNPLWYAGAFGLGLLAGRLGDRVSLGFVVETERQVEAHLASHLERLPEGDHDSRAIVAQMKDDEARHAQDAQNAGALPMPAPVKALMQASARLMTTTAHYL.

Residues glutamate 58, glutamate 88, histidine 91, glutamate 140, glutamate 172, and histidine 175 each coordinate Fe cation.

Belongs to the COQ7 family. Requires Fe cation as cofactor.

Its subcellular location is the cell membrane. The catalysed reaction is a 5-methoxy-2-methyl-3-(all-trans-polyprenyl)benzene-1,4-diol + AH2 + O2 = a 3-demethylubiquinol + A + H2O. It functions in the pathway cofactor biosynthesis; ubiquinone biosynthesis. Its function is as follows. Catalyzes the hydroxylation of 2-nonaprenyl-3-methyl-6-methoxy-1,4-benzoquinol during ubiquinone biosynthesis. In Polaromonas sp. (strain JS666 / ATCC BAA-500), this protein is 3-demethoxyubiquinol 3-hydroxylase.